A 227-amino-acid polypeptide reads, in one-letter code: PKHD-type hydroxylase Bphy_5374 (227 aa).

A Fe2OG dioxygenase domain is found at 79 to 179 (KVYPPLFNRY…RVASFFWVQS (101 aa)). Fe cation-binding residues include His-97, Asp-99, and His-160. Arg-170 is a 2-oxoglutarate binding site.

Fe(2+) is required as a cofactor. It depends on L-ascorbate as a cofactor.

The protein is PKHD-type hydroxylase Bphy_5374 of Paraburkholderia phymatum (strain DSM 17167 / CIP 108236 / LMG 21445 / STM815) (Burkholderia phymatum).